The sequence spans 179 residues: Large ribosomal subunit protein uL5 (179 aa).

This sequence belongs to the universal ribosomal protein uL5 family. As to quaternary structure, part of the 50S ribosomal subunit; part of the 5S rRNA/L5/L18/L25 subcomplex. Contacts the 5S rRNA and the P site tRNA. Forms a bridge to the 30S subunit in the 70S ribosome.

Its function is as follows. This is one of the proteins that bind and probably mediate the attachment of the 5S RNA into the large ribosomal subunit, where it forms part of the central protuberance. In the 70S ribosome it contacts protein S13 of the 30S subunit (bridge B1b), connecting the 2 subunits; this bridge is implicated in subunit movement. Contacts the P site tRNA; the 5S rRNA and some of its associated proteins might help stabilize positioning of ribosome-bound tRNAs. The polypeptide is Large ribosomal subunit protein uL5 (Marinomonas sp. (strain MWYL1)).